The following is a 358-amino-acid chain: uncharacterized protein (358 aa).

Residues 1–47 form a disordered region; sequence MGNVAGETRANVIPLHTNRSRVAARRRAGQRAESRQHPSLLSDPNDR. The segment covering 18 to 29 has biased composition (basic residues); sequence NRSRVAARRRAG.

To M.leprae ML2427.

This is an uncharacterized protein from Mycobacterium tuberculosis (strain CDC 1551 / Oshkosh).